Reading from the N-terminus, the 69-residue chain is Cold shock protein CapB (69 aa).

The 60-residue stretch at Gly7–Val66 folds into the CSD domain.

It localises to the cytoplasm. Functionally, affects cell viability at low temperatures. In Pseudomonas fragi, this protein is Cold shock protein CapB (capB).